Consider the following 138-residue polypeptide: Large ribosomal subunit protein bL17 (138 aa).

Residues R118–A138 are disordered.

Belongs to the bacterial ribosomal protein bL17 family. Part of the 50S ribosomal subunit. Contacts protein L32.

The sequence is that of Large ribosomal subunit protein bL17 from Rhodopseudomonas palustris (strain HaA2).